The chain runs to 500 residues: Catalase (500 aa).

Residues histidine 59 and asparagine 131 contribute to the active site. Tyrosine 339 serves as a coordination point for heme.

The protein belongs to the catalase family. Heme is required as a cofactor.

The enzyme catalyses 2 H2O2 = O2 + 2 H2O. Decomposes hydrogen peroxide into water and oxygen; serves to protect cells from the toxic effects of hydrogen peroxide. This chain is Catalase (katA), found in Neisseria gonorrhoeae.